A 257-amino-acid polypeptide reads, in one-letter code: Uroporphyrinogen-III C-methyltransferase (257 aa).

Residues P11, 87-89, 117-118, and M170 each bind S-adenosyl-L-homocysteine; these read GGD and TS.

The protein belongs to the precorrin methyltransferase family.

It carries out the reaction uroporphyrinogen III + 2 S-adenosyl-L-methionine = precorrin-2 + 2 S-adenosyl-L-homocysteine + H(+). It participates in cofactor biosynthesis; adenosylcobalamin biosynthesis; precorrin-2 from uroporphyrinogen III: step 1/1. It functions in the pathway porphyrin-containing compound metabolism; siroheme biosynthesis; precorrin-2 from uroporphyrinogen III: step 1/1. Functionally, catalyzes the two successive C-2 and C-7 methylation reactions involved in the conversion of uroporphyrinogen III to precorrin-2 via the intermediate formation of precorrin-1. It is a step in the biosynthesis of both cobalamin (vitamin B12) and siroheme. This chain is Uroporphyrinogen-III C-methyltransferase (sumT), found in Bacillus subtilis (strain 168).